The sequence spans 344 residues: D-arabinose dehydrogenase [NAD(P)+] heavy chain (344 aa).

Tyr-71 acts as the Proton donor in catalysis. A substrate-binding site is contributed by His-131. Position 151 is a phosphothreonine (Thr-151). An NADP(+)-binding site is contributed by 241–295 (SPLGSHGAPNLKIPLVKKLAEKYNVTGNDLLISYHIRQGTIVIPRSLNPVRISSS).

The protein belongs to the aldo/keto reductase family. As to quaternary structure, heterodimer of a heavy chain and a light chain.

It localises to the cytoplasm. The catalysed reaction is D-arabinose + NADP(+) = D-arabinono-1,4-lactone + NADPH + H(+). It catalyses the reaction D-arabinose + NAD(+) = D-arabinono-1,4-lactone + NADH + H(+). In terms of biological role, catalyzes the oxidation of D-arabinose, L-xylose, L-fucose and L-galactose in the presence of NADP(+). The protein is D-arabinose dehydrogenase [NAD(P)+] heavy chain (ARA1) of Saccharomyces cerevisiae (strain ATCC 204508 / S288c) (Baker's yeast).